We begin with the raw amino-acid sequence, 52 residues long: Large ribosomal subunit protein eL40 (52 aa).

Belongs to the eukaryotic ribosomal protein eL40 family.

The chain is Large ribosomal subunit protein eL40 from Thermococcus onnurineus (strain NA1).